The primary structure comprises 545 residues: Squalene monooxygenase SE2 (545 aa).

The chain crosses the membrane as a helical span at residues 12–32; it reads EYFLMFAATLLFGFVLYLFTL. Residues 86-87, 106-107, Arg114, Arg185, Val201, Asp364, and Met377 each bind FAD; these read VA and ER. The next 2 membrane-spanning stretches (helical) occupy residues 475–495 and 500–520; these read LFFHFFAVAIYGVGRLLIPFP and MWLGARLISGASGIIFPIIKS.

Belongs to the squalene monooxygenase family. FAD serves as cofactor. In terms of tissue distribution, weak expression in petioles and flower buds and barely detectable in roots and leaves. In petioles, preferentially observed in vascular bundle tissue (phloem cells and parenchymatous cells near xylem) and resin ducts.

It is found in the membrane. It carries out the reaction squalene + reduced [NADPH--hemoprotein reductase] + O2 = (S)-2,3-epoxysqualene + oxidized [NADPH--hemoprotein reductase] + H2O + H(+). It functions in the pathway terpene metabolism; lanosterol biosynthesis; lanosterol from farnesyl diphosphate: step 2/3. Component of the triterpene saponins (e.g. ginsenosides or panaxosides) and phytosterols biosynthetic pathways. Catalyzes the first oxygenation step in sterol biosynthesis and is suggested to be one of the rate-limiting enzymes in this pathway. The protein is Squalene monooxygenase SE2 of Panax ginseng (Korean ginseng).